A 248-amino-acid chain; its full sequence is Adenosylcobinamide-GDP ribazoletransferase (248 aa).

Transmembrane regions (helical) follow at residues 28–48, 103–123, 126–146, 169–189, 193–213, and 225–245; these read LFWF…AGYL, VGSF…IVLV, LAFG…LVQV, AGIQ…LLLM, MLPS…MSLL, and VLGA…VFLA.

The protein belongs to the CobS family. Mg(2+) serves as cofactor.

The protein resides in the cell inner membrane. It carries out the reaction alpha-ribazole + adenosylcob(III)inamide-GDP = adenosylcob(III)alamin + GMP + H(+). It catalyses the reaction alpha-ribazole 5'-phosphate + adenosylcob(III)inamide-GDP = adenosylcob(III)alamin 5'-phosphate + GMP + H(+). Its pathway is cofactor biosynthesis; adenosylcobalamin biosynthesis; adenosylcobalamin from cob(II)yrinate a,c-diamide: step 7/7. Joins adenosylcobinamide-GDP and alpha-ribazole to generate adenosylcobalamin (Ado-cobalamin). Also synthesizes adenosylcobalamin 5'-phosphate from adenosylcobinamide-GDP and alpha-ribazole 5'-phosphate. This Chlorobium phaeobacteroides (strain BS1) protein is Adenosylcobinamide-GDP ribazoletransferase.